Consider the following 434-residue polypeptide: Phosphomethylpyrimidine synthase 2 (434 aa).

Substrate contacts are provided by residues Met94, Tyr123, His162, 184-186 (SRG), 225-228 (NAMR), and Glu264. His268 is a Zn(2+) binding site. Tyr291 is a substrate binding site. His332 is a Zn(2+) binding site. Residues Cys408, Cys411, and Cys415 each coordinate [4Fe-4S] cluster.

This sequence belongs to the ThiC family. The cofactor is [4Fe-4S] cluster.

The catalysed reaction is 5-amino-1-(5-phospho-beta-D-ribosyl)imidazole + S-adenosyl-L-methionine = 4-amino-2-methyl-5-(phosphooxymethyl)pyrimidine + CO + 5'-deoxyadenosine + formate + L-methionine + 3 H(+). It functions in the pathway cofactor biosynthesis; thiamine diphosphate biosynthesis. Catalyzes the synthesis of the hydroxymethylpyrimidine phosphate (HMP-P) moiety of thiamine from aminoimidazole ribotide (AIR) in a radical S-adenosyl-L-methionine (SAM)-dependent reaction. This Methanosphaera stadtmanae (strain ATCC 43021 / DSM 3091 / JCM 11832 / MCB-3) protein is Phosphomethylpyrimidine synthase 2.